The sequence spans 63 residues: Crotasin (63 aa).

Positions 1-22 (MKILYLLSAFLFLAFLSESGNA) are cleaved as a signal peptide. Disulfide bonds link cysteine 26–cysteine 56, cysteine 33–cysteine 50, and cysteine 38–cysteine 57.

Highly expressed in pancreas, heart, liver, brain and kidney. Expressed to a low extent in the venom gland.

The protein resides in the secreted. This is Crotasin from Crotalus durissus terrificus (South American rattlesnake).